We begin with the raw amino-acid sequence, 125 residues long: Large ribosomal subunit protein bL12 (125 aa).

It belongs to the bacterial ribosomal protein bL12 family. In terms of assembly, homodimer. Part of the ribosomal stalk of the 50S ribosomal subunit. Forms a multimeric L10(L12)X complex, where L10 forms an elongated spine to which 2 to 4 L12 dimers bind in a sequential fashion. Binds GTP-bound translation factors.

Its function is as follows. Forms part of the ribosomal stalk which helps the ribosome interact with GTP-bound translation factors. Is thus essential for accurate translation. The sequence is that of Large ribosomal subunit protein bL12 from Nitrobacter winogradskyi (strain ATCC 25391 / DSM 10237 / CIP 104748 / NCIMB 11846 / Nb-255).